The following is a 447-amino-acid chain: Ribosomal protein uS12 methylthiotransferase RimO (447 aa).

Residues 4 to 114 (PKVGFVSLGC…VMEAVHEYVP (111 aa)) form the MTTase N-terminal domain. Residues Cys-13, Cys-49, Cys-78, Cys-147, Cys-151, and Cys-154 each contribute to the [4Fe-4S] cluster site. One can recognise a Radical SAM core domain in the interval 133–370 (LTPKHYAYLK…MQVQQQISAA (238 aa)). The TRAM domain maps to 373–443 (QKRIGQTMTV…EYDLFAKLIK (71 aa)).

Belongs to the methylthiotransferase family. RimO subfamily. It depends on [4Fe-4S] cluster as a cofactor.

It localises to the cytoplasm. The enzyme catalyses L-aspartate(89)-[ribosomal protein uS12]-hydrogen + (sulfur carrier)-SH + AH2 + 2 S-adenosyl-L-methionine = 3-methylsulfanyl-L-aspartate(89)-[ribosomal protein uS12]-hydrogen + (sulfur carrier)-H + 5'-deoxyadenosine + L-methionine + A + S-adenosyl-L-homocysteine + 2 H(+). Its function is as follows. Catalyzes the methylthiolation of an aspartic acid residue of ribosomal protein uS12. The polypeptide is Ribosomal protein uS12 methylthiotransferase RimO (Acinetobacter baumannii (strain AB307-0294)).